The primary structure comprises 135 residues: Small ribosomal subunit protein uS12 (135 aa).

A disordered region spans residues 1 to 20 (MPTINQLVRKGRHSKVTKSK). Basic residues predominate over residues 9-18 (RKGRHSKVTK). At Asp-102 the chain carries 3-methylthioaspartic acid.

This sequence belongs to the universal ribosomal protein uS12 family. In terms of assembly, part of the 30S ribosomal subunit. Contacts proteins S8 and S17. May interact with IF1 in the 30S initiation complex.

Functionally, with S4 and S5 plays an important role in translational accuracy. Interacts with and stabilizes bases of the 16S rRNA that are involved in tRNA selection in the A site and with the mRNA backbone. Located at the interface of the 30S and 50S subunits, it traverses the body of the 30S subunit contacting proteins on the other side and probably holding the rRNA structure together. The combined cluster of proteins S8, S12 and S17 appears to hold together the shoulder and platform of the 30S subunit. The sequence is that of Small ribosomal subunit protein uS12 from Lactobacillus helveticus (strain DPC 4571).